The following is a 249-amino-acid chain: Small ribosomal subunit protein uS3y (249 aa).

A KH type-2 domain is found at 21 to 92; that stretch reads LNEVLTRELA…SVELYAEKVN (72 aa). Position 212 is a phosphoserine (Ser212).

This sequence belongs to the universal ribosomal protein uS3 family.

In Arabidopsis thaliana (Mouse-ear cress), this protein is Small ribosomal subunit protein uS3y (RPS3B).